Reading from the N-terminus, the 214-residue chain is Phosphatidyl-N-methylethanolamine N-methyltransferase (214 aa).

Over 1 to 19 the chain is Lumenal; it reads MPLVALGVADLFNFVDYSK. Positions 20-40 form an intramembrane region, helical; it reads TSLAISAAAIAFNPTFWNIVA. Over 41 to 52 the chain is Lumenal; the sequence is RREYRTKFLTRA. A helical transmembrane segment spans residues 53–74; sequence FGGNAQVACYFLAVTIFGLGLV. The Cytoplasmic portion of the chain corresponds to 75–101; sequence RDFLYERALRDQPSHPLLEGTYVKYAA. The chain crosses the membrane as a helical span at residues 102–122; sequence YALLALGNLLVITSTMRLGIT. Position 106–108 (106–108) interacts with S-adenosyl-L-methionine; sequence ALG. Residues 123–165 lie on the Lumenal side of the membrane; sequence GTFLGDYFGILMDGIVTGFPFNVTSAPMYYGSTMSFLGTALLY. Residues 166-186 form a helical membrane-spanning segment; sequence GKPAGLLLTAWVLFVYIIAIQ. The Cytoplasmic portion of the chain corresponds to 187–214; the sequence is FENPFTAEIYAKRDRERAKAAGTSKKEL. 188-189 contributes to the S-adenosyl-L-methionine binding site; that stretch reads EN.

Belongs to the class VI-like SAM-binding methyltransferase superfamily. PEMT/PEM2 methyltransferase family.

It is found in the endoplasmic reticulum membrane. It localises to the mitochondrion membrane. The catalysed reaction is a 1,2-diacyl-sn-glycero-3-phospho-N-methylethanolamine + S-adenosyl-L-methionine = a 1,2-diacyl-sn-glycero-3-phospho-N,N-dimethylethanolamine + S-adenosyl-L-homocysteine + H(+). The enzyme catalyses a 1,2-diacyl-sn-glycero-3-phospho-N,N-dimethylethanolamine + S-adenosyl-L-methionine = a 1,2-diacyl-sn-glycero-3-phosphocholine + S-adenosyl-L-homocysteine + H(+). It participates in phospholipid metabolism; phosphatidylcholine biosynthesis. Catalyzes the second two steps of the methylation pathway of phosphatidylcholine biosynthesis, the SAM-dependent methylation of phosphatidylmonomethylethanolamine (PMME) to phosphatidyldimethylethanolamine (PDME) and of PDME to phosphatidylcholine (PC). The polypeptide is Phosphatidyl-N-methylethanolamine N-methyltransferase (Neurospora crassa (strain ATCC 24698 / 74-OR23-1A / CBS 708.71 / DSM 1257 / FGSC 987)).